A 469-amino-acid chain; its full sequence is MGKSLYDKVWDLHKVRTLPSGEDQLFIGLHLIHEVTSPQAFGMLRDLGLRVSMPERTFATLDHIVPTDNRKRPFKDTLAEGMVDALKKACTEQGVTFFDLESGKQGIVHIIGPELGLTQPGMTIACGDSHTSTHGAFGAIAFGIGTTQVRDVLATQTLSLQRLKVRRIQVEGKLGPGVYAKDIILEIIRRLGVSGGTGYAYEYGGSTIEGFSMEERMTLCNMSIEGGARVGYVNPDQVTFEYMKGRPYAPKGEAWEKALEYWRSIASDEDARYDDVVRINASEIAPTVTWGITPGQAISVKEKVPAAEDVTNESERALIREALEYMRLEGGKPIEGTKINVAFIGSCTNGRLSDFREVARRIQGHRVAPHVRALAVPGSMEVARAAEAEGLDRVFREAGFEWREPGCSMCLAMNPDKLIGDELCASSSNRNFKGRQGSPTGRTVLMSPVMVAAAAVRGEIADARDVFGI.

Positions 347, 407, and 410 each coordinate [4Fe-4S] cluster.

Belongs to the aconitase/IPM isomerase family. LeuC type 1 subfamily. In terms of assembly, heterodimer of LeuC and LeuD. [4Fe-4S] cluster is required as a cofactor.

The enzyme catalyses (2R,3S)-3-isopropylmalate = (2S)-2-isopropylmalate. It functions in the pathway amino-acid biosynthesis; L-leucine biosynthesis; L-leucine from 3-methyl-2-oxobutanoate: step 2/4. In terms of biological role, catalyzes the isomerization between 2-isopropylmalate and 3-isopropylmalate, via the formation of 2-isopropylmaleate. The chain is 3-isopropylmalate dehydratase large subunit from Sorangium cellulosum (strain So ce56) (Polyangium cellulosum (strain So ce56)).